Here is a 330-residue protein sequence, read N- to C-terminus: DNA repair and recombination protein RadA (330 aa).

124–131 (GEFGSGKT) is a binding site for ATP.

This sequence belongs to the eukaryotic RecA-like protein family.

Its function is as follows. Involved in DNA repair and in homologous recombination. Binds and assemble on single-stranded DNA to form a nucleoprotein filament. Hydrolyzes ATP in a ssDNA-dependent manner and promotes DNA strand exchange between homologous DNA molecules. In Pyrobaculum neutrophilum (strain DSM 2338 / JCM 9278 / NBRC 100436 / V24Sta) (Thermoproteus neutrophilus), this protein is DNA repair and recombination protein RadA.